Consider the following 1755-residue polypeptide: Transposon Ty1-LR2 Gag-Pol polyprotein (1755 aa).

Composition is skewed to polar residues over residues 1 to 23 (MESQ…SVTS), 48 to 60 (TKAN…TPAS), and 127 to 152 (QSQF…GNTF). Disordered regions lie at residues 1-93 (MESQ…MMTQ), 126-174 (PQSQ…PPPM), and 352-421 (GSRN…SKST). The segment covering 153–165 (TDSSSADSDMTST) has biased composition (low complexity). Positions 299–401 (NNGIHINNKV…NSKSKTARAH (103 aa)) are RNA-binding. Residues 402–418 (NVSTSNNSPSTDNDSIS) are compositionally biased toward low complexity. Position 416 is a phosphoserine (Ser416). Catalysis depends on Asp461, which acts as the For protease activity; shared with dimeric partner. The interval 583–640 (NVHTSESTRKYPYPFIHRMLAHANAPTIRYSLKNNTITYFNESDVDWSSAIDYQCPDC) is integrase-type zinc finger-like. Positions 660 to 835 (NSYEPFQYLH…AGLDISTLLP (176 aa)) constitute an Integrase catalytic domain. Mg(2+) contacts are provided by Asp671 and Asp736. Disordered stretches follow at residues 956 to 1087 (SKAV…ETEK), 1092 to 1111 (RSPS…NIVP), and 1130 to 1187 (DLPL…DNET). The span at 960–969 (SPTDSTPPST) shows a compositional bias: low complexity. Residues 1005–1015 (STPQISNIEST) are compositionally biased toward polar residues. The span at 1038–1053 (ESSHASKSKDFRHSDS) shows a compositional bias: basic and acidic residues. 2 stretches are compositionally biased toward polar residues: residues 1054–1082 (YSEN…QISD) and 1101–1111 (PENNSSHNIVP). The Bipartite nuclear localization signal motif lies at 1178–1212 (KKRSLEDNETEIKVSRDTWNTKNMRSLEPPRSKKR). Residues 1338-1476 (NNYYITQLDI…DILGLEIKYQ (139 aa)) enclose the Reverse transcriptase Ty1/copia-type domain. Asp1346, Asp1427, Asp1428, Asp1610, Glu1652, and Asp1685 together coordinate Mg(2+). The RNase H Ty1/copia-type domain maps to 1610-1752 (DASYGNQPYY…IKTFKLLTNK (143 aa)).

As to quaternary structure, the capsid protein forms a homotrimer, from which the VLPs are assembled. The protease is a homodimer, whose active site consists of two apposed aspartic acid residues. Initially, virus-like particles (VLPs) are composed of the structural unprocessed proteins Gag and Gag-Pol, and also contain the host initiator methionine tRNA (tRNA(i)-Met) which serves as a primer for minus-strand DNA synthesis, and a dimer of genomic Ty RNA. Processing of the polyproteins occurs within the particle and proceeds by an ordered pathway, called maturation. First, the protease (PR) is released by autocatalytic cleavage of the Gag-Pol polyprotein yielding capsid protein p45 and a Pol-p154 precursor protein. This cleavage is a prerequisite for subsequent processing of Pol-p154 at the remaining sites to release the mature structural and catalytic proteins. Maturation takes place prior to the RT reaction and is required to produce transposition-competent VLPs.

It localises to the cytoplasm. The protein localises to the nucleus. The enzyme catalyses DNA(n) + a 2'-deoxyribonucleoside 5'-triphosphate = DNA(n+1) + diphosphate. The catalysed reaction is Endonucleolytic cleavage to 5'-phosphomonoester.. Its function is as follows. Capsid protein (CA) is the structural component of the virus-like particle (VLP), forming the shell that encapsulates the retrotransposons dimeric RNA genome. The particles are assembled from trimer-clustered units and there are holes in the capsid shells that allow for the diffusion of macromolecules. CA also has nucleocapsid-like chaperone activity, promoting primer tRNA(i)-Met annealing to the multipartite primer-binding site (PBS), dimerization of Ty1 RNA and initiation of reverse transcription. In terms of biological role, the aspartyl protease (PR) mediates the proteolytic cleavages of the Gag and Gag-Pol polyproteins after assembly of the VLP. Reverse transcriptase/ribonuclease H (RT) is a multifunctional enzyme that catalyzes the conversion of the retro-elements RNA genome into dsDNA within the VLP. The enzyme displays a DNA polymerase activity that can copy either DNA or RNA templates, and a ribonuclease H (RNase H) activity that cleaves the RNA strand of RNA-DNA heteroduplexes during plus-strand synthesis and hydrolyzes RNA primers. The conversion leads to a linear dsDNA copy of the retrotransposon that includes long terminal repeats (LTRs) at both ends. Functionally, integrase (IN) targets the VLP to the nucleus, where a subparticle preintegration complex (PIC) containing at least integrase and the newly synthesized dsDNA copy of the retrotransposon must transit the nuclear membrane. Once in the nucleus, integrase performs the integration of the dsDNA into the host genome. This chain is Transposon Ty1-LR2 Gag-Pol polyprotein (TY1B-LR2), found in Saccharomyces cerevisiae (strain ATCC 204508 / S288c) (Baker's yeast).